Here is a 2283-residue protein sequence, read N- to C-terminus: AT-rich interactive domain-containing protein 1A (2283 aa).

The span at 1–10 (MAAQVAPAAA) shows a compositional bias: low complexity. 3 disordered regions span residues 1 to 333 (MAAQ…PADM), 346 to 822 (AAAA…LPNA), and 979 to 1006 (ATKMNNKADGTPKTESKSKKSSSSTTTN). Ala-2 carries the N-acetylalanine modification. The segment covering 22-34 (ELKKAEQQQREEA) has biased composition (basic and acidic residues). A phosphoserine mark is found at Ser-56 and Ser-77. Residues 77–93 (SNGGGGGGGAGSGGGPG) are compositionally biased toward gly residues. Low complexity-rich tracts occupy residues 128-143 (SSSDGVGAPPHSAAAA) and 233-266 (SSPRGGTPGSGAAAAAGSKPPPSSSASASSSSSS). Ser-234 bears the Phosphoserine mark. The segment covering 274 to 287 (AMGGGGPSAAGGGT) has biased composition (gly residues). Thr-287 is modified (phosphothreonine). Residues 296–300 (LNQLL) carry the LXXLL motif. Residues 296 to 307 (LNQLLTSPSSAR) are compositionally biased toward polar residues. Position 302 is a phosphoserine (Ser-302). The segment covering 311 to 328 (GYPGGDYGGGPQDGGAGK) has biased composition (gly residues). Residues Ser-365 and Ser-384 each carry the phosphoserine modification. Residues 402–427 (PYSQQQGPPSGPQQGHGYPGQPYGSQ) show a composition bias toward low complexity. The residue at position 431 (Arg-431) is an Asymmetric dimethylarginine. Polar residues-rich tracts occupy residues 438-451 (GRAQSAMGSLSYAQ) and 459-470 (QGPSAYGQQGQT). 2 stretches are compositionally biased toward low complexity: residues 471-547 (PYYN…QHPQ) and 554-596 (QPQA…YSQQ). At Ser-605 the chain carries Phosphoserine. Low complexity predominate over residues 611–622 (SQASSAPSMTSS). Residues 629–638 (MNLSLQSRPS) show a composition bias toward polar residues. A compositionally biased stretch (low complexity) spans 659–675 (SPGVSTSGISSSQGEQS). Over residues 676 to 686 (NPAQSPFSPHT) the composition is skewed to polar residues. Ser-697, Ser-699, Ser-703, Ser-731, Ser-765, and Ser-773 each carry phosphoserine. Composition is skewed to polar residues over residues 731–748 (SGQSDSIMHPSMNQSSIA) and 756–794 (RNPQMPQYTSPQPGSALSPRQPSGGQMHSGVGSYQQNSM). The span at 795 to 822 (GSYGPQGSQYGPQGGYPRQPNYNALPNA) shows a compositional bias: low complexity. The ARID domain occupies 1018 to 1109 (EPERKMWVDR…CLYAFECKIE (92 aa)). 2 disordered regions span residues 1114-1484 (PPPD…MMGG) and 1539-1636 (RANH…PPMI). A compositionally biased stretch (low complexity) spans 1142-1155 (MQGPQTPQSTSSSM). Positions 1163-1178 (PPTPASTPHSQIPPLP) are enriched in pro residues. Position 1185 is a phosphoserine (Ser-1185). Residues 1198–1220 (PTFQKRNSMTPNPGYQPSMNTSD) show a composition bias toward polar residues. Ser-1236 is subject to Phosphoserine. Residue Arg-1277 is modified to Omega-N-methylarginine. Low complexity predominate over residues 1343–1368 (QFSTQGTPSSSPFPSQQTTMYQQQQQ). The Nuclear localization signal signature appears at 1369-1388 (NYKRPMDGTYGPPAKRHEGE). Low complexity predominate over residues 1395 to 1426 (SAGQGQPQQQQLPAAQSQPASQPQAAQPSPQQ). Polar residues-rich tracts occupy residues 1427–1436 (DVYNQYSNAY) and 1469–1478 (PGSSAQQNMP). Pro residues predominate over residues 1555-1579 (PYGPSAPVPPMTRPPPSNYQPPPSM). Ser-1605 carries the post-translational modification Phosphoserine. At Lys-1613 the chain carries N6-acetyllysine. Residues 1710–1714 (LPGLL) carry the LXXLL motif. Disordered stretches follow at residues 1757 to 1782 (PAHTEEEEEEHLDPKLEEEEEEGVGN), 1872 to 1904 (CPTPPRKHLTTVEGTPGTTEQEGPPPDGLPEKR), and 1917 to 1941 (SSTLTDEGAKSAEATKESSKFPFGI). The segment covering 1761–1782 (EEEEEEHLDPKLEEEEEEGVGN) has biased composition (acidic residues). 2 positions are modified to phosphothreonine: Thr-1874 and Thr-1886. Over residues 1882-1893 (TVEGTPGTTEQE) the composition is skewed to low complexity. Lys-1903 is subject to N6-acetyllysine. The span at 1923 to 1935 (EGAKSAEATKESS) shows a compositional bias: basic and acidic residues. Residues Ser-1927 and Ser-1942 each carry the phosphoserine modification. Short sequence motifs (LXXLL) lie at residues 1965–1969 (LCTLL) and 2083–2087 (LDGLL).

In terms of assembly, component of SWI/SNF chromatin remodeling complexes, in some of which it can be mutually exclusive with ARID1B/BAF250B. The canonical complex contains a catalytic subunit (either SMARCA4/BRG1/BAF190A or SMARCA2/BRM/BAF190B) and at least SMARCE1, ACTL6A/BAF53, SMARCC1/BAF155, SMARCC2/BAF170, and SMARCB1/SNF5/BAF47. Other subunits specific to each of the complexes may also be present permitting several possible combinations developmentally and tissue specific. Component of the BAF (SWI/SNF-A) complex, which includes at least actin (ACTB), ARID1A/BAF250A, ARID1B/BAF250B, SMARCA2/BRM, SMARCA4/BRG1/BAF190A, ACTL6A/BAF53, ACTL6B/BAF53B, SMARCE1/BAF57, SMARCC1/BAF155, SMARCC2/BAF170, SMARCB1/SNF5/INI1, and one or more SMARCD1/BAF60A, SMARCD2/BAF60B, or SMARCD3/BAF60C. In muscle cells, the BAF complex also contains DPF3. Component of neural progenitors-specific chromatin remodeling complex (npBAF complex) composed of at least, ARID1A/BAF250A or ARID1B/BAF250B, SMARCD1/BAF60A, SMARCD3/BAF60C, SMARCA2/BRM/BAF190B, SMARCA4/BRG1/BAF190A, SMARCB1/BAF47, SMARCC1/BAF155, SMARCE1/BAF57, SMARCC2/BAF170, PHF10/BAF45A, ACTL6A/BAF53A and actin. Component of neuron-specific chromatin remodeling complex (nBAF complex) composed of at least, ARID1A/BAF250A or ARID1B/BAF250B, SMARCD1/BAF60A, SMARCD3/BAF60C, SMARCA2/BRM/BAF190B, SMARCA4/BRG1/BAF190A, SMARCB1/BAF47, SMARCC1/BAF155, SMARCE1/BAF57, SMARCC2/BAF170, DPF1/BAF45B, DPF3/BAF45C, ACTL6B/BAF53B and actin. Component of a SWI/SNF-like EBAFa complex, at least composed of SMARCA4/BRG1/BAF190A, SMARCB1/BAF47/SNF5, ACTL6A/BAF53A, SMARCE1/BAF57, SMARCD1/BAF60A, SMARCC1/BAF155, SMARCC2/BAF170, BAF250A and MLLT1/ENL. Interacts through its C-terminus with SMARCA2/BRM/BAF190B and SMARCA4/BRG1/BAF190A. Interacts with SMARCC1/BAF155. Interacts with FOS (via bZIP domain and leucine-zipper region), FOSB isoform 1 and 2, FOSL1 and FOSL2. In terms of tissue distribution, widely expressed. Expressed at high levels in the testis.

The protein localises to the nucleus. Its function is as follows. Involved in transcriptional activation and repression of select genes by chromatin remodeling (alteration of DNA-nucleosome topology). Component of SWI/SNF chromatin remodeling complexes that carry out key enzymatic activities, changing chromatin structure by altering DNA-histone contacts within a nucleosome in an ATP-dependent manner. Binds DNA non-specifically. Belongs to the neural progenitors-specific chromatin remodeling complex (npBAF complex) and the neuron-specific chromatin remodeling complex (nBAF complex). During neural development a switch from a stem/progenitor to a postmitotic chromatin remodeling mechanism occurs as neurons exit the cell cycle and become committed to their adult state. The transition from proliferating neural stem/progenitor cells to postmitotic neurons requires a switch in subunit composition of the npBAF and nBAF complexes. As neural progenitors exit mitosis and differentiate into neurons, npBAF complexes which contain ACTL6A/BAF53A and PHF10/BAF45A, are exchanged for homologous alternative ACTL6B/BAF53B and DPF1/BAF45B or DPF3/BAF45C subunits in neuron-specific complexes (nBAF). The npBAF complex is essential for the self-renewal/proliferative capacity of the multipotent neural stem cells. The nBAF complex along with CREST plays a role regulating the activity of genes essential for dendrite growth. This is AT-rich interactive domain-containing protein 1A (Arid1a) from Mus musculus (Mouse).